The chain runs to 629 residues: 1-deoxy-D-xylulose-5-phosphate synthase (629 aa).

Thiamine diphosphate is bound by residues H72 and 113-115 (GHA). Residue D144 coordinates Mg(2+). Thiamine diphosphate is bound by residues 145-146 (GA), N174, Y287, and E370. N174 contacts Mg(2+).

Belongs to the transketolase family. DXPS subfamily. Homodimer. Mg(2+) serves as cofactor. It depends on thiamine diphosphate as a cofactor.

It catalyses the reaction D-glyceraldehyde 3-phosphate + pyruvate + H(+) = 1-deoxy-D-xylulose 5-phosphate + CO2. It functions in the pathway metabolic intermediate biosynthesis; 1-deoxy-D-xylulose 5-phosphate biosynthesis; 1-deoxy-D-xylulose 5-phosphate from D-glyceraldehyde 3-phosphate and pyruvate: step 1/1. Its function is as follows. Catalyzes the acyloin condensation reaction between C atoms 2 and 3 of pyruvate and glyceraldehyde 3-phosphate to yield 1-deoxy-D-xylulose-5-phosphate (DXP). This Prochlorococcus marinus (strain MIT 9312) protein is 1-deoxy-D-xylulose-5-phosphate synthase.